Reading from the N-terminus, the 248-residue chain is Ras-like protein family member 11B (248 aa).

Residues 29-246 (AGRRLVKIAV…ALSAKVRTVT (218 aa)) are small GTPase-like. GTP-binding positions include 40-47 (GASGVGKT), 87-91 (DTPGI), and 152-155 (NKAD). The segment at 205-229 (QQPSGTPEKRRTSLIPRPKSPNMQD) is disordered.

It belongs to the small GTPase superfamily. Ras family.

It catalyses the reaction GTP + H2O = GDP + phosphate + H(+). This Bos taurus (Bovine) protein is Ras-like protein family member 11B.